The sequence spans 1087 residues: Exoglucanase XynX (1087 aa).

The first 30 residues, 1–30, serve as a signal peptide directing secretion; the sequence is MKNNLSKFVSIFTAFIMIFGTSLFFPHVSA. The CBM-cenC domain maps to 37 to 188; that stretch reads ANLVSNGDFE…YIDDVVVTPQ (152 aa). Residues 204-527 form the GH10 domain; that stretch reads QNDIPDLSSV…KPAYWAIADP (324 aa). Glu347 acts as the Proton donor in catalysis. The active site involves Asp389. The active-site Nucleophile is the Glu452. 3 SLH domains span residues 903–966, 967–1025, and 1028–1087; these read KKSV…YNGE, FSDV…KEEN, and ATSF…SNNL.

The protein belongs to the glycosyl hydrolase 10 (cellulase F) family.

It catalyses the reaction Hydrolysis of (1-&gt;4)-beta-D-glucosidic linkages in cellulose and cellotetraose, releasing cellobiose from the non-reducing ends of the chains.. The protein is Exoglucanase XynX (xynX) of Acetivibrio thermocellus (Hungateiclostridium thermocellum).